Consider the following 65-residue polypeptide: Large ribosomal subunit protein bL35 (65 aa).

The span at 1–11 (MPKIKTRRSAA) shows a compositional bias: basic residues. 2 disordered regions span residues 1–24 (MPKI…KFKR) and 41–65 (RMRL…MPYA).

Belongs to the bacterial ribosomal protein bL35 family.

The protein is Large ribosomal subunit protein bL35 of Nitratidesulfovibrio vulgaris (strain DSM 19637 / Miyazaki F) (Desulfovibrio vulgaris).